A 161-amino-acid polypeptide reads, in one-letter code: Nucleotide-binding protein GM21_0633 (161 aa).

It belongs to the YajQ family.

Its function is as follows. Nucleotide-binding protein. In Geobacter sp. (strain M21), this protein is Nucleotide-binding protein GM21_0633.